Here is a 21-residue protein sequence, read N- to C-terminus: Formate ester dehydrogenase beta chain (21 aa).

In terms of assembly, heterotrimer composed of an alpha, a beta and a gamma chain.

The protein is Formate ester dehydrogenase beta chain of Amycolatopsis methanolica.